A 149-amino-acid polypeptide reads, in one-letter code: Protein K7 (149 aa).

The protein belongs to the orthopoxvirus OPG044 family. Interacts with DDX3; this interaction inhibits DDX3 and suppresses DDX3-mediated IFN-beta promoter induction. Interacts with TRAF6 and IRAK2; these interactions suppress TLR-dependent NF-KappaB activation.

It is found in the host cytoplasm. Virulence factor that affects the acute immune response to infection. Bcl-2-like protein which, through its interaction with the DEAD box RNA helicase DDX3X/DDX3, prevents TBK1/IKKepsilon-mediated IRF3 activation. Contributes to virulence by binding to the host TRAF6 and IRAK2 and preventing host NF-kappa-B activation. The polypeptide is Protein K7 (OPG044) (Homo sapiens (Human)).